The following is a 452-amino-acid chain: Minor capsid protein (452 aa).

Composition is skewed to basic and acidic residues over residues 219–236 (VDKPEDKPKPVFDDKGKQ) and 247–258 (GKPDISKPGEKQ). Residues 219-258 (VDKPEDKPKPVFDDKGKQPTDTVPPVDNGKPDISKPGEKQ) are disordered.

It belongs to the closteroviridae minor capsid protein family.

It is found in the virion. Minor capsid protein that encapsidates the 5'-terminal portion of the viral genome. The polypeptide is Minor capsid protein (Lettuce infectious yellows virus (isolate United States/92) (LIYV)).